A 576-amino-acid chain; its full sequence is Mycobactin import ATP-binding/permease protein IrtB (576 aa).

Residues 1–25 (MIRTLIALVPADKRGTLGLYTVLTV) are Cytoplasmic-facing. In terms of domain architecture, ABC transmembrane type-1 spans 19-299 (LYTVLTVLSV…LSELTPAIES (281 aa)). A helical membrane pass occupies residues 26 to 46 (LSVVIRAAGTVLLVPLVAALF). Over 47–52 (GDTPQD) the chain is Periplasmic. The chain crosses the membrane as a helical span at residues 53-73 (AWPWLGWLTAATAAGWIVDTT). The Cytoplasmic segment spans residues 74-131 (TSRLGFDLGFAVLDHTQHDVADRMPNIRLDWLTAENTATARAAIASTGPELVGLVVNL). Helical transmembrane passes span 132 to 152 (LTPL…LVAV) and 153 to 173 (SPPL…AMWA). The Cytoplasmic segment spans residues 174-241 (SNRLSRKADT…RLLAMQIPGQ (68 aa)). Residues 242–262 (LLFSLASQLALILLAGMATWL) traverse the membrane as a helical segment. Residues 263–267 (TVRGE) lie on the Periplasmic side of the membrane. Residues 268–288 (LSVPEAVAMIVVVARYLEPFT) traverse the membrane as a helical segment. The Cytoplasmic segment spans residues 289–576 (SLSELTPAIE…HEAADWQITH (288 aa)). The 234-residue stretch at 332–565 (IEFDCVTFGY…GGRFDEFWRR (234 aa)) folds into the ABC transporter domain. 364–371 (GPSGSGKS) is a binding site for ATP.

This sequence belongs to the ABC transporter superfamily. Siderophore-Fe(3+) uptake transporter (SIUT) (TC 3.A.1.21) family. As to quaternary structure, forms a heterodimer with IrtA.

It is found in the cell inner membrane. Its function is as follows. Part of the ABC transporter complex IrtAB involved in the import of iron-bound mycobactin (Fe-MBT) and carboxymycobactin (Fe-cMBT). Has a preference for Fe-MBT over Fe-cMBT. Transmembrane domains (TMD) form a pore in the membrane and the ATP-binding domain (NBD) is responsible for energy generation. In Mycolicibacterium smegmatis (strain ATCC 700084 / mc(2)155) (Mycobacterium smegmatis), this protein is Mycobactin import ATP-binding/permease protein IrtB.